A 733-amino-acid chain; its full sequence is Methylmalonyl-CoA mutase large subunit (733 aa).

Residues 1-10 show a composition bias toward acidic residues; it reads MRIPEFDDIE. The interval 1 to 22 is disordered; the sequence is MRIPEFDDIELGAGGGPSGSAE. Positions 78, 81, 88, 90, 92, and 117 each coordinate (R)-methylmalonyl-CoA. 2 residues coordinate cob(II)alamin: F120 and A142. T198 and Q200 together coordinate (R)-methylmalonyl-CoA. Positions 209 and 210 each coordinate cob(II)alamin. (R)-methylmalonyl-CoA contacts are provided by R210, H247, R286, and S288. Cob(II)alamin contacts are provided by G336, E373, A376, G612, H613, D614, R615, S658, L660, G689, and T712. A B12-binding domain is found at 600 to 732; the sequence is RPRILVAKMG…KRLAADLGHE (133 aa).

This sequence belongs to the methylmalonyl-CoA mutase family. As to quaternary structure, heterodimer of an alpha and a beta chain. Requires adenosylcob(III)alamin as cofactor.

It carries out the reaction (R)-methylmalonyl-CoA = succinyl-CoA. Its function is as follows. Catalyzes the isomerization of succinyl-CoA to methylmalonyl-CoA during synthesis of propionate from tricarboxylic acid-cycle intermediates. This conversion most likely represents an important source of building blocks for polyketide antibiotic biosynthesis. It is unable to catalyze the conversion of isobutyryl-CoA into N-butyryl-CoA. This Streptomyces virginiae (Streptomyces cinnamonensis) protein is Methylmalonyl-CoA mutase large subunit (mutB).